Here is a 400-residue protein sequence, read N- to C-terminus: Nicotinate phosphoribosyltransferase (400 aa).

Phosphohistidine; by autocatalysis is present on His220.

This sequence belongs to the NAPRTase family. Post-translationally, transiently phosphorylated on a His residue during the reaction cycle. Phosphorylation strongly increases the affinity for substrates and increases the rate of nicotinate D-ribonucleotide production. Dephosphorylation regenerates the low-affinity form of the enzyme, leading to product release.

The enzyme catalyses nicotinate + 5-phospho-alpha-D-ribose 1-diphosphate + ATP + H2O = nicotinate beta-D-ribonucleotide + ADP + phosphate + diphosphate. It functions in the pathway cofactor biosynthesis; NAD(+) biosynthesis; nicotinate D-ribonucleotide from nicotinate: step 1/1. Its function is as follows. Catalyzes the synthesis of beta-nicotinate D-ribonucleotide from nicotinate and 5-phospho-D-ribose 1-phosphate at the expense of ATP. In Salmonella typhimurium (strain LT2 / SGSC1412 / ATCC 700720), this protein is Nicotinate phosphoribosyltransferase.